The sequence spans 176 residues: Interleukin-1 receptor antagonist protein (176 aa).

Positions 1–25 are cleaved as a signal peptide; that stretch reads METCRCPLSYLISFLLFLSHSETAC. Cysteines 91 and 141 form a disulfide. The N-linked (GlcNAc...) asparagine glycan is linked to Asn-109.

Belongs to the IL-1 family.

The protein localises to the secreted. Its function is as follows. Anti-inflammatory antagonist of interleukin-1 family of proinflammatory cytokines such as interleukin-1beta/IL1B and interleukin-1alpha/IL1A. Protects from immune dysregulation and uncontrolled systemic inflammation triggered by IL1 for a range of innate stimulatory agents such as pathogens. This is Interleukin-1 receptor antagonist protein (IL1RN) from Canis lupus familiaris (Dog).